Consider the following 29-residue polypeptide: Small toxic protein ZorP (29 aa).

A helical membrane pass occupies residues 10-27 (VLIAVLELLVALLRLIDL).

It is found in the membrane. Functionally, toxic component of a type I toxin-antitoxin (TA) system. Overexpression leads to cell stasis and a decrease in colony-forming units. Probably repressed by cognate small RNA orzP. Base pairing occurs between 18 bases in the 5' UTR of zorP mRNA and the 5' end of OrzP sRNA. This is Small toxic protein ZorP from Escherichia coli O157:H7.